Consider the following 594-residue polypeptide: Fidgetin-like protein 1 (594 aa).

Disordered regions lie at residues 1-79 (MYSP…DDEL) and 239-261 (QSIGSLAGIPPARRAPDIPKRCS). Positions 56-73 (PSDSAQQQPPFKSRSQQN) are enriched in polar residues. Residues Ala-319 and 359-364 (GTGKTM) contribute to the ATP site.

The protein belongs to the AAA ATPase family. Hexamer. Requires Mg(2+) as cofactor. In terms of tissue distribution, expressed in germ cells.

It localises to the nucleus. The enzyme catalyses ATP + H2O = ADP + phosphate + H(+). In terms of biological role, has a role in spindle assembly which acts in the progression through mitosis during embryogenesis. Required for fertility. In Caenorhabditis elegans, this protein is Fidgetin-like protein 1 (figl-1).